Consider the following 427-residue polypeptide: Endothelin-1 receptor (427 aa).

The N-terminal stretch at 1–20 (METLCLRASFWLALVGCVIS) is a signal peptide. At 21–80 (DNPERYSTNLSNHVDDFTTFRGTELSFLVTTHQPTNLVLPSNGSMHNYCPQQTKITSAFK) the chain is on the extracellular side. Asparagine 29 and asparagine 62 each carry an N-linked (GlcNAc...) asparagine glycan. The chain crosses the membrane as a helical span at residues 81 to 102 (YINTVISCTIFIVGMVGNATLL). Topologically, residues 103-112 (RIIYQNKCMR) are cytoplasmic. The helical transmembrane segment at 113-132 (NGPNALIASLALGDLIYVVI) threads the bilayer. The Extracellular portion of the chain corresponds to 133–159 (DLPINVFKLLAGRWPFDHNDFGVFLCK). An intrachain disulfide couples cysteine 158 to cysteine 239. The chain crosses the membrane as a helical span at residues 160-181 (LFPFLQKSSVGITVLNLCALSV). The Cytoplasmic segment spans residues 182-205 (DRYRAVASWSRVQGIGIPLVTAIE). A helical membrane pass occupies residues 206–229 (IVSIWILSFILAIPEAIGFVMVPF). At 230-256 (EYRGEQHKTCMLNATSKFMEFYQDVKD) the chain is on the extracellular side. A helical transmembrane segment spans residues 257 to 278 (WWLFGFYFCMPLVCTAIFYTLM). Residues 279-306 (TCEMLNRRNGSLRIALSEHLKQRREVAK) lie on the Cytoplasmic side of the membrane. The helical transmembrane segment at 307 to 328 (TVFCLVVIFALCWFPLHLSRIL) threads the bilayer. Residues 329–347 (KKTVYNEMDKNRCELLSFL) are Extracellular-facing. A helical membrane pass occupies residues 348 to 372 (LLMDYIGINLATMNSCINPIALYFV). Residues 373 to 427 (SKKFKNCFQSCLCCCCYQSKSLMTSVPMNGTSIQWKNHDQNNHNTDRSSHKDSMN) lie on the Cytoplasmic side of the membrane. The tract at residues 406–427 (QWKNHDQNNHNTDRSSHKDSMN) is disordered. Positions 408-427 (KNHDQNNHNTDRSSHKDSMN) are enriched in basic and acidic residues. Position 425 is a phosphoserine (serine 425).

This sequence belongs to the G-protein coupled receptor 1 family. Endothelin receptor subfamily. EDNRA sub-subfamily. In terms of assembly, interacts with HDAC7 and KAT5. As to expression, isoform 1, isoform 3 and isoform 4 are expressed in a variety of tissues, with highest levels in the aorta and cerebellum, followed by lung, atrium and cerebral cortex, lower levels in the placenta, kidney, adrenal gland, duodenum, colon, ventricle and liver but no expression in umbilical vein endothelial cells. Within the placenta, isoform 1, isoform 2, isoform 3 and isoform 4 are expressed in the villi and stem villi vessels.

The protein resides in the cell membrane. In terms of biological role, receptor for endothelin-1. Mediates its action by association with G proteins that activate a phosphatidylinositol-calcium second messenger system. The rank order of binding affinities for ET-A is: ET1 &gt; ET2 &gt;&gt; ET3. This is Endothelin-1 receptor from Homo sapiens (Human).